Here is a 394-residue protein sequence, read N- to C-terminus: Ornithine aminotransferase 1 (394 aa).

The residue at position 252 (Lys252) is an N6-(pyridoxal phosphate)lysine.

This sequence belongs to the class-III pyridoxal-phosphate-dependent aminotransferase family. OAT subfamily. Requires pyridoxal 5'-phosphate as cofactor.

It localises to the cytoplasm. It carries out the reaction a 2-oxocarboxylate + L-ornithine = L-glutamate 5-semialdehyde + an L-alpha-amino acid. The protein operates within amino-acid biosynthesis; L-proline biosynthesis; L-glutamate 5-semialdehyde from L-ornithine: step 1/1. Catalyzes the interconversion of ornithine to glutamate semialdehyde. The sequence is that of Ornithine aminotransferase 1 from Staphylococcus aureus (strain Mu50 / ATCC 700699).